A 218-amino-acid polypeptide reads, in one-letter code: Glutathione S-transferase-like protein OpS6 (218 aa).

One can recognise a GST N-terminal domain in the interval 5–86 (QPIKLYAHKK…YLIEQYDKDG (82 aa)). The region spanning 92–218 (SLQDKSLARA…KIAATKAALA (127 aa)) is the GST C-terminal domain.

It belongs to the GST superfamily.

Its pathway is secondary metabolite biosynthesis. Functionally, glutathione S-transferase-like protein; part of the gene cluster that mediates the biosynthesis of the bibenzoquinone oosporein, a metabolite required for fungal virulence that acts by evading host immunity to facilitate fungal multiplication in insects. The non-reducing polyketide synthase OpS1 produces orsellinic acid by condensing acetyl-CoA with 3 malonyl-CoA units. Orsellinic acid is then hydroxylated to benzenetriol by the hydroxylase OpS4. The intermediate is oxidized either nonenzymatically to 5,5'-dideoxy-oosporein or enzymatically to benzenetetrol by the oxidoreductase OpS7. The latter is further dimerized to oosporein by the catalase OpS5. OpS6 probably functions en route for protecting cells against oxidative stress by scavenging any leaked free radical form of benzenetetrol by activating the thiol group of glutathione. The protein is Glutathione S-transferase-like protein OpS6 of Beauveria bassiana (strain ARSEF 2860) (White muscardine disease fungus).